The sequence spans 335 residues: Phosphatidylinositol:ceramide inositolphosphotransferase (335 aa).

The Cytoplasmic segment spans residues 1–21 (MVLMGPHSALRLLPLKTQAIR). The helical transmembrane segment at 22 to 42 (FVLLLLLSVLILAVALLVTNA) threads the bilayer. Topologically, residues 43–72 (RMPDPKVVRPLPDIGFEVFPKVGWLEHLTD) are extracellular. The chain crosses the membrane as a helical span at residues 73–93 (VCIFILNFLSLLVVFKLYLLH). The Cytoplasmic segment spans residues 94–98 (RQNEG). A helical transmembrane segment spans residues 99–119 (LDELQPFSCCPLIGKIIFGVW). Residues 120 to 139 (DSGRQSGIEKRDAHLIAWIR) are Extracellular-facing. A helical membrane pass occupies residues 140–160 (YFTTYFIVLLFRAIVVVMTSY). At 161 to 179 (PATDNHCQNPMKITNPVKN) the chain is on the cytoplasmic side. The helical transmembrane segment at 180–200 (VIMTLVTFGSGSIHCGDLMFS) threads the bilayer. The Extracellular segment spans residues 201-203 (GHT). The active site involves His202. Residues 204–224 (VSITLSLLVQWIYGSMLHWVF) traverse the membrane as a helical segment. Over 225–335 (RPASVLLVLL…GPACGNFGHW (111 aa)) the chain is Cytoplasmic. Catalysis depends on residues His245 and Asp249.

Belongs to the sphingomyelin synthase family.

It is found in the membrane. Bidirectional lipid inositolphosphotransferase capable of converting phosphatidylinositol (PI) and ceramide to inositol-phosphorylceramide (IPC) and diacylglycerol (DAG) and vice versa. Direction is dependent on the relative concentrations of DAG and ceramide as phosphoinositol acceptors. Essential for viability of the pathogenic bloodstream stage of this human protozoan parasite and, consequently, can be considered as potential drug target. In Trypanosoma cruzi (strain CL Brener), this protein is Phosphatidylinositol:ceramide inositolphosphotransferase.